The chain runs to 113 residues: Protein translation factor SUI1 homolog (113 aa).

It belongs to the SUI1 family.

Probably involved in translation. In Spuriopimpinella brachycarpa (Chamnamul), this protein is Protein translation factor SUI1 homolog.